The following is a 110-amino-acid chain: Snake venom vascular endothelial growth factor toxin ICPP (110 aa).

Pyrrolidone carboxylic acid is present on Gln1. 3 disulfides stabilise this stretch: Cys14–Cys56, Cys45–Cys91, and Cys49–Cys93.

Homodimer; disulfide-linked. Interacts with high affinity with KDR/VEGFR-2, and with a lower affinity with neuropilin-1 (NRP1) and neuropilin-2 (NRP2). In terms of tissue distribution, expressed by the venom gland.

The protein localises to the secreted. Snake venom VEGFs may contribute to venom dispersion and prey subjugation by inducing vascular permeability and hypotension. This protein increases vascular permeability and angiogenesis probably through VEGF receptor (KDR/VEGFR-2) signaling. Induces DNA synthesis in human umbilical vein endothelial cells, and promotes mouse embryonic stem cell proliferation and differentiation. It may also induce a drastic hypotensive effect after intravenous injection. The hypotension is mediated by nitric oxide (NO), which is produced by VEGF-activated endothelium NO synthase. The protein is Snake venom vascular endothelial growth factor toxin ICPP of Macrovipera lebetinus (Levantine viper).